The primary structure comprises 536 residues: Nucleolar protein 58 (536 aa).

Threonine 34 carries the post-translational modification Phosphothreonine. Residue serine 109 is modified to Phosphoserine. Lysine 157 is covalently cross-linked (Glycyl lysine isopeptide (Lys-Gly) (interchain with G-Cter in SUMO2)). In terms of domain architecture, Nop spans 282–400 (IAPNVTVMVG…LEARLRILED (119 aa)). A phosphoserine mark is found at serine 304 and serine 351. Glycyl lysine isopeptide (Lys-Gly) (interchain with G-Cter in SUMO2) cross-links involve residues lysine 353, lysine 411, lysine 415, lysine 422, lysine 426, lysine 441, lysine 444, and lysine 465. Residues 414-427 (AKAEKYEHKSEVKT) show a composition bias toward basic and acidic residues. The tract at residues 414–440 (AKAEKYEHKSEVKTYDPSGDSTLPTCS) is disordered. Residue lysine 467 forms a Glycyl lysine isopeptide (Lys-Gly) (interchain with G-Cter in SUMO); alternate linkage. Residue lysine 467 forms a Glycyl lysine isopeptide (Lys-Gly) (interchain with G-Cter in SUMO1); alternate linkage. Lysine 467 is covalently cross-linked (Glycyl lysine isopeptide (Lys-Gly) (interchain with G-Cter in SUMO2); alternate). Residues 470-488 (VEEEMEEEEAEEEQVVEEE) are compositionally biased toward acidic residues. A disordered region spans residues 470–536 (VEEEMEEEEA…KKKKKKDAED (67 aa)). Residue lysine 492 forms a Glycyl lysine isopeptide (Lys-Gly) (interchain with G-Cter in SUMO2) linkage. Residues 492–502 (KKKKKKDKKKH) are compositionally biased toward basic residues. A Glycyl lysine isopeptide (Lys-Gly) (interchain with G-Cter in SUMO); alternate cross-link involves residue lysine 504. A Glycyl lysine isopeptide (Lys-Gly) (interchain with G-Cter in SUMO2); alternate cross-link involves residue lysine 504. Phosphoserine occurs at positions 509 and 521. Residues 524–536 (KKKKKKKKKDAED) show a composition bias toward basic residues.

The protein belongs to the NOP5/NOP56 family. In terms of assembly, core component of box C/D small nucleolar ribonucleoprotein (snoRNP) particles; the core proteins SNU13, NOP56, NOP58 and FBL or FBLL1 assemble stepwise onto the snoRNA. Interacts with NOLC1/Nopp140. Interacts with NOPCHAP1, NUFIP1, RUVBL1 and RUVBL2; NOPCHAP1 bridges the association of NOP58 with RUVBL1:RUVBL2 and NUFIP1. Interacts with PIH1D1. Part of the small subunit (SSU) processome, composed of more than 70 proteins and the RNA chaperone small nucleolar RNA (snoRNA) U3. In terms of processing, sumoylation is essential for high-affinity binding to snoRNAs.

The protein localises to the nucleus. It is found in the nucleolus. Its subcellular location is the nucleoplasm. Required for the biogenesis of box C/D snoRNAs such as U3, U8 and U14 snoRNAs. Part of the small subunit (SSU) processome, first precursor of the small eukaryotic ribosomal subunit. During the assembly of the SSU processome in the nucleolus, many ribosome biogenesis factors, an RNA chaperone and ribosomal proteins associate with the nascent pre-rRNA and work in concert to generate RNA folding, modifications, rearrangements and cleavage as well as targeted degradation of pre-ribosomal RNA by the RNA exosome. Core component of box C/D small nucleolar ribonucleoprotein (snoRNP) complexes that function in methylation of multiple sites on ribosomal RNAs (rRNAs) and messenger RNAs (mRNAs). The chain is Nucleolar protein 58 (Nop58) from Mus musculus (Mouse).